The following is a 92-amino-acid chain: UPF0223 protein SZO_10560 (92 aa).

It belongs to the UPF0223 family.

This is UPF0223 protein SZO_10560 from Streptococcus equi subsp. zooepidemicus (strain H70).